The sequence spans 184 residues: Photosynthetic apparatus regulatory protein RegA (184 aa).

One can recognise a Response regulatory domain in the interval 14–128; it reads SLLLVDDDEP…EVTHALLAKG (115 aa).

In terms of processing, phosphorylated by RegB.

Its function is as follows. Member of the two-component regulatory system RegB/RegA. Involved in transactivating anaerobic expression of the photosynthetic apparatus. It is a transcriptional regulator that is responsible for activating expression of the puf, puh, and puc operons in response to a decrease in oxygen tension. The sequence is that of Photosynthetic apparatus regulatory protein RegA (regA) from Cereibacter sphaeroides (strain ATCC 17023 / DSM 158 / JCM 6121 / CCUG 31486 / LMG 2827 / NBRC 12203 / NCIMB 8253 / ATH 2.4.1.) (Rhodobacter sphaeroides).